The chain runs to 125 residues: Large ribosomal subunit protein bL12 (125 aa).

The protein belongs to the bacterial ribosomal protein bL12 family. In terms of assembly, homodimer. Part of the ribosomal stalk of the 50S ribosomal subunit. Forms a multimeric L10(L12)X complex, where L10 forms an elongated spine to which 2 to 4 L12 dimers bind in a sequential fashion. Binds GTP-bound translation factors.

Functionally, forms part of the ribosomal stalk which helps the ribosome interact with GTP-bound translation factors. Is thus essential for accurate translation. This is Large ribosomal subunit protein bL12 from Francisella tularensis subsp. novicida (strain U112).